Reading from the N-terminus, the 183-residue chain is Adenine phosphoribosyltransferase (183 aa).

It belongs to the purine/pyrimidine phosphoribosyltransferase family. Homodimer.

It localises to the cytoplasm. The catalysed reaction is AMP + diphosphate = 5-phospho-alpha-D-ribose 1-diphosphate + adenine. The protein operates within purine metabolism; AMP biosynthesis via salvage pathway; AMP from adenine: step 1/1. Functionally, catalyzes a salvage reaction resulting in the formation of AMP, that is energically less costly than de novo synthesis. This is Adenine phosphoribosyltransferase from Cronobacter sakazakii (strain ATCC BAA-894) (Enterobacter sakazakii).